Reading from the N-terminus, the 398-residue chain is Acetate kinase (398 aa).

Asparagine 7 provides a ligand contact to Mg(2+). Position 14 (lysine 14) interacts with ATP. Arginine 85 contacts substrate. The active-site Proton donor/acceptor is the aspartate 142. Residues histidine 202 to glycine 206, aspartate 277 to arginine 279, and glycine 325 to asparagine 329 each bind ATP. Residue glutamate 379 participates in Mg(2+) binding.

It belongs to the acetokinase family. As to quaternary structure, homodimer. Mg(2+) serves as cofactor. Mn(2+) is required as a cofactor.

The protein localises to the cytoplasm. The catalysed reaction is acetate + ATP = acetyl phosphate + ADP. It participates in metabolic intermediate biosynthesis; acetyl-CoA biosynthesis; acetyl-CoA from acetate: step 1/2. Its function is as follows. Catalyzes the formation of acetyl phosphate from acetate and ATP. Can also catalyze the reverse reaction. The polypeptide is Acetate kinase (Deinococcus radiodurans (strain ATCC 13939 / DSM 20539 / JCM 16871 / CCUG 27074 / LMG 4051 / NBRC 15346 / NCIMB 9279 / VKM B-1422 / R1)).